A 219-amino-acid polypeptide reads, in one-letter code: Translation initiation factor 6 (219 aa).

It belongs to the eIF-6 family.

Functionally, binds to the 50S ribosomal subunit and prevents its association with the 30S ribosomal subunit to form the 70S initiation complex. In Methanosarcina mazei (strain ATCC BAA-159 / DSM 3647 / Goe1 / Go1 / JCM 11833 / OCM 88) (Methanosarcina frisia), this protein is Translation initiation factor 6.